The sequence spans 134 residues: Small ribosomal subunit protein bS6 (134 aa).

A disordered region spans residues Pro-99–Glu-134. Residues Ser-105–Asn-119 are compositionally biased toward basic and acidic residues. Over residues Phe-120 to Glu-134 the composition is skewed to acidic residues.

It belongs to the bacterial ribosomal protein bS6 family.

Binds together with bS18 to 16S ribosomal RNA. In Psychrobacter sp. (strain PRwf-1), this protein is Small ribosomal subunit protein bS6.